We begin with the raw amino-acid sequence, 148 residues long: Urease accessory protein UreE (148 aa).

The protein belongs to the UreE family.

The protein resides in the cytoplasm. Its function is as follows. Involved in urease metallocenter assembly. Binds nickel. Probably functions as a nickel donor during metallocenter assembly. The sequence is that of Urease accessory protein UreE from Halalkalibacterium halodurans (strain ATCC BAA-125 / DSM 18197 / FERM 7344 / JCM 9153 / C-125) (Bacillus halodurans).